Consider the following 472-residue polypeptide: Phosphoenolpyruvate carboxylase (472 aa).

This sequence belongs to the PEPCase type 2 family. As to quaternary structure, homotetramer. Mg(2+) is required as a cofactor.

The enzyme catalyses oxaloacetate + phosphate = phosphoenolpyruvate + hydrogencarbonate. Functionally, catalyzes the irreversible beta-carboxylation of phosphoenolpyruvate (PEP) to form oxaloacetate (OAA), a four-carbon dicarboxylic acid source for the tricarboxylic acid cycle. The chain is Phosphoenolpyruvate carboxylase from Pyrococcus furiosus (strain ATCC 43587 / DSM 3638 / JCM 8422 / Vc1).